The following is a 42-amino-acid chain: Photosystem I reaction center subunit IX (42 aa).

The helical transmembrane segment at 8–28 (YLSTIPVVGAIWLTFTAGFII) threads the bilayer.

It belongs to the PsaJ family.

The protein localises to the plastid. Its subcellular location is the chloroplast thylakoid membrane. May help in the organization of the PsaE and PsaF subunits. The sequence is that of Photosystem I reaction center subunit IX from Gracilaria tenuistipitata var. liui (Red alga).